A 506-amino-acid chain; its full sequence is MTWNEGYVLEVNYTYGFYGELSPLKLALANTLKSLKSPNLEKNFNYCELACGRGYSTNLLASCYPQAQFYANDFNPSHIVEARTLAETAGTKNVHFFDDSFEEFINQDLPQFDFIVLHGIYSWITPRNRQAIVNFIRQKIKVGGMVYISYNTLPGWAAARPMQALMLRYGRNSSEPILSRIEKALDFTEQMLESKANYFTQNPILKPRLEKLKEQNRYYLAHEYFNEEWNAFYFDEVAKELEEAKLNFMGSAHLIDYVDAVNLSSAAQTQLSQVTDPTFREVVRDFFLNTQFRRDIFVRGKLALLPQEHLQALGNLRFALVVPIKSIKLKQQFPLGEVELQEKVYRPICEALENGPLTLGELQKDSKTKGITLNSLYQALIIMTGIGYTHPAVNETVRKQRQKSTDAFNSAVKTKSLYSDEMAFLASPLVGTGIAVNRLEQLLLLAKERKQDGPQFVWQVLSSQGKKIIKEGKTLETEAENLEHLKNVAENFNGDRLPLLTKLGIS.

To R.prowazekii RP789, RP027 and RP028.

This is an uncharacterized protein from Synechocystis sp. (strain ATCC 27184 / PCC 6803 / Kazusa).